Reading from the N-terminus, the 44-residue chain is Cytochrome b559 subunit beta (44 aa).

The helical transmembrane segment at 19–35 (WLAVHTLAVPTVFFVGA) threads the bilayer. Position 23 (histidine 23) interacts with heme.

The protein belongs to the PsbE/PsbF family. As to quaternary structure, heterodimer of an alpha subunit and a beta subunit. PSII is composed of 1 copy each of membrane proteins PsbA, PsbB, PsbC, PsbD, PsbE, PsbF, PsbH, PsbI, PsbJ, PsbK, PsbL, PsbM, PsbT, PsbX, PsbY, PsbZ, Psb30/Ycf12, peripheral proteins PsbO, CyanoQ (PsbQ), PsbU, PsbV and a large number of cofactors. It forms dimeric complexes. It depends on heme b as a cofactor.

Its subcellular location is the cellular thylakoid membrane. Its function is as follows. This b-type cytochrome is tightly associated with the reaction center of photosystem II (PSII). PSII is a light-driven water:plastoquinone oxidoreductase that uses light energy to abstract electrons from H(2)O, generating O(2) and a proton gradient subsequently used for ATP formation. It consists of a core antenna complex that captures photons, and an electron transfer chain that converts photonic excitation into a charge separation. This is Cytochrome b559 subunit beta from Crocosphaera subtropica (strain ATCC 51142 / BH68) (Cyanothece sp. (strain ATCC 51142)).